The primary structure comprises 855 residues: Endochitinase 2 (855 aa).

A signal peptide spans 1-22; that stretch reads MGPTNILAAFIAVSSLFIQSLA. The 312-residue stretch at 29–340 folds into the GH18 domain; it reads SNLAVYWGQG…DIMKEVLLRC (312 aa). An N-linked (GlcNAc...) asparagine glycan is attached at Asn90. The active-site Proton donor is the Glu175. The segment at 341-672 is disordered; that stretch reads DPDPPTSTVT…APSSSTTEDR (332 aa). Residues 346-400 are compositionally biased toward low complexity; the sequence is TSTVTSTTSASTSTQTSSQSTTMETKTLSASTTPSSPSTVSPSSTMQTTSTGSTS. Positions 401 to 456 are enriched in polar residues; that stretch reads IETVTTRSQEPPSTTISTRSASTEPVTTRSQEPPSTTISTRSASTETVTTRSQEPP. Residues 457–483 are compositionally biased toward low complexity; that stretch reads STTISTWSASTETSTSSQDSPSTTIST. The segment covering 484–521 has biased composition (polar residues); the sequence is KSAPTGTVTTRSQDLPSTTISTRSPETETETATTKSQG. Low complexity predominate over residues 522–533; sequence SPSITLSTRSSS. Polar residues predominate over residues 534-555; sequence AETVSTRSQHSSSTTISTKSAP. The span at 556-567 shows a compositional bias: low complexity; sequence TETGTTSEHSTS. Polar residues predominate over residues 568–641; the sequence is MPVSTRSAST…SQTPTTIITG (74 aa). 2 stretches are compositionally biased toward low complexity: residues 642–652 and 659–672; these read TPSDPVSAPTT and TLTL…TEDR. Gly826 carries the GPI-anchor amidated glycine lipid modification. Residues 827 to 855 constitute a propeptide, removed in mature form; that stretch reads SAMTVRSMDVVAKALITAGAAVLGLFLGL.

Belongs to the glycosyl hydrolase 18 family. Chitinase class III subfamily.

It is found in the cell membrane. It carries out the reaction Random endo-hydrolysis of N-acetyl-beta-D-glucosaminide (1-&gt;4)-beta-linkages in chitin and chitodextrins.. Its function is as follows. May be associated with endosporulation. This Coccidioides posadasii (strain C735) (Valley fever fungus) protein is Endochitinase 2 (CTS2).